The following is a 402-amino-acid chain: Type II NADH:quinone oxidoreductase (402 aa).

Residues G12–A16, N39–K40, and V83 contribute to the FAD site. Residue E172 is part of the active site. FAD contacts are provided by residues D302, A319–Q320, and K379.

The protein belongs to the NADH dehydrogenase family. Homodimer in solution. Forms homotetramers; dimer of dimers. FAD is required as a cofactor.

It is found in the cell membrane. It catalyses the reaction a quinone + NADH + H(+) = a quinol + NAD(+). The enzyme catalyses a menaquinone + NADH + H(+) = a menaquinol + NAD(+). The catalysed reaction is a ubiquinone + NADH + H(+) = a ubiquinol + NAD(+). Its activity is regulated as follows. Inhibited by HQNO, a quinone derivative. Functionally, alternative, nonproton pumping NADH:quinone oxidoreductase that delivers electrons to the respiratory chain by oxidation of NADH and reduction of quinones, and contributes to the regeneration of NAD(+). Can use DMN, a menaquinone analog, 2,3-dimethoxy-5,6-dimethyl-benzoquinone (DDB), an ubiquinone analog, or 2,3,5,6-tetramethyl-1,4-benzoquinone (Duroquinone, DQ) a plastoquinone analog as electron acceptors. The sequence is that of Type II NADH:quinone oxidoreductase from Staphylococcus aureus (strain NCTC 8325 / PS 47).